A 444-amino-acid chain; its full sequence is DNA repair protein RadA (444 aa).

The segment at Cys10–Cys27 adopts a C4-type zinc-finger fold. Gly91 to Ser98 contacts ATP. Positions Lys247–Gly251 match the RadA KNRFG motif motif. The segment at Asp345–Phe444 is lon-protease-like.

Belongs to the RecA family. RadA subfamily.

In terms of biological role, DNA-dependent ATPase involved in processing of recombination intermediates, plays a role in repairing DNA breaks. Stimulates the branch migration of RecA-mediated strand transfer reactions, allowing the 3' invading strand to extend heteroduplex DNA faster. Binds ssDNA in the presence of ADP but not other nucleotides, has ATPase activity that is stimulated by ssDNA and various branched DNA structures, but inhibited by SSB. Does not have RecA's homology-searching function. This chain is DNA repair protein RadA, found in Aquifex aeolicus (strain VF5).